A 127-amino-acid polypeptide reads, in one-letter code: DNA-directed RNA polymerases I, II, and III subunit RPABC2 (127 aa).

Acidic residues predominate over residues Met1–Gly32. The interval Met1 to Ile52 is disordered. An N-acetylserine modification is found at Ser2. Ser2 carries the phosphoserine; by CK2 modification.

Belongs to the archaeal Rpo6/eukaryotic RPB6 RNA polymerase subunit family. In terms of assembly, component of the RNA polymerase I (Pol I), RNA polymerase II (Pol II) and RNA polymerase III (Pol III) complexes consisting of at least 13, 12 and 17 subunits, respectively. Pol I complex consists of a ten-subunit catalytic core composed of POLR1A/RPA1, POLR1B/RPA2, POLR1C/RPAC1, POLR1D/RPAC2, POLR1H/RPA12, POLR2E/RPABC1, POLR2F/RPABC2, POLR2H/RPABC3, POLR2K/RPABC4 and POLR2L/RPABC5; a mobile stalk subunit POLR1F/RPA43 protruding from the core and additional subunits homologous to general transcription factors POLR1E/RPA49 and POLR1G/RPA34. Part of Pol I pre-initiation complex (PIC), in which Pol I core assembles with RRN3 and promoter-bound UTBF and SL1/TIF-IB complex. Pol II complex contains a ten-subunit catalytic core composed of POLR2A/RPB1, POLR2B/RPB2, POLR2C/RPB3, POLR2I/RPB9, POLR2J/RPB11, POLR2E/RPABC1, POLR2F/RPABC2, POLR2H/RPABC3, POLR2K/RPABC4 and POLR2L/RPABC5 and a mobile stalk composed of two subunits POLR2D/RPB4 and POLR2G/RPB7. Part of Pol II(G) complex, in which Pol II core associates with an additional subunit POLR2M; unlike conventional Pol II, Pol II(G) functions as a transcriptional repressor. Part of TBP-based Pol II pre-initiation complex (PIC), in which Pol II core assembles with general transcription factors and other specific initiation factors including GTF2E1, GTF2E2, GTF2F1, GTF2F2, TCEA1, ERCC2, ERCC3, GTF2H2, GTF2H3, GTF2H4, GTF2H5, GTF2A1, GTF2A2, GTF2B and TBP; this large multi-subunit PIC complex mediates DNA unwinding and targets Pol II core to the transcription start site where the first phosphodiester bond forms. Pol III complex consists of a ten-subunit catalytic core composed of POLR3A/RPC1, POLR3B/RPC2, POLR1C/RPAC1, POLR1D/RPAC2, POLR3K/RPC10, POLR2E/RPABC1, POLR2F/RPABC2, POLR2H/RPABC3, POLR2K/RPABC4 and POLR2L/RPABC5; a mobile stalk composed of two subunits POLR3H/RPC8 and CRCP/RPC9, protruding from the core and functioning primarily in transcription initiation; and additional subunits homologous to general transcription factors of the RNA polymerase II machinery, POLR3C/RPC3-POLR3F/RPC6-POLR3G/RPC7 heterotrimer required for transcription initiation and POLR3D/RPC4-POLR3E/RPC5 heterodimer involved in both transcription initiation and termination.

It is found in the nucleus. The protein localises to the nucleolus. DNA-dependent RNA polymerase catalyzes the transcription of DNA into RNA using the four ribonucleoside triphosphates as substrates. Common component of RNA polymerases I, II, and III which synthesize ribosomal RNA precursors, mRNA precursors and many functional non-coding RNAs, and small RNAs, such as 5S rRNA and tRNAs, respectively. Pol II is the central component of the basal RNA polymerase II transcription machinery. Pols are composed of mobile elements that move relative to each other. In Pol II, POLR2F/RPABC2 is part of the clamp element and together with parts of POLR2A/RPB1 and POLR2B/RPB2 forms a pocket to which the POLR2D/RPB4-POLR2G/RPB7 subcomplex binds. In Bos taurus (Bovine), this protein is DNA-directed RNA polymerases I, II, and III subunit RPABC2 (POLR2F).